Reading from the N-terminus, the 599-residue chain is Protein ref(2)P (599 aa).

The 86-residue stretch at 3-88 (EKLLKITYQG…CESNMHVQVA (86 aa)) folds into the PB1 domain. The ZZ-type zinc-finger motif lies at 122 to 173 (HDSVQCDGCGLAPLIGFRYKCVQCSNFDLCQKCESAHKHPEHLMLRMPTNNG). Residues cysteine 127, cysteine 130, cysteine 142, cysteine 145, cysteine 151, cysteine 154, histidine 160, and histidine 163 each contribute to the Zn(2+) site. Disordered regions lie at residues 192-225 (RRSRGHCPFQEASQPAPAAEPARDSRRERRHARR), 245-319 (TTAT…INLD), 357-453 (GIFA…LDPE), and 507-544 (ASANTQTAQVDTVSTSTSTTSVTTNSVGTSPAAPDDKR). Residues 199 to 211 (PFQEASQPAPAAE) are compositionally biased toward low complexity. Residues 276–286 (KATESEAKPTE) show a composition bias toward basic and acidic residues. Residues 291 to 319 (NTDQSVPTTEDPVTTPRSTEPTTPVINLD) are compositionally biased toward polar residues. Over residues 375-411 (QSQSSGQSAASSASQSAVPSAAPSANQSNVPSANQSA) the composition is skewed to low complexity. 3 tandem repeats follow at residues 386-393 (SASQSAVP), 399-406 (ANQSNVPS), and 407-413 (ANQSATP). Residues 386–413 (SASQSAVPSAAPSANQSNVPSANQSATP) form a 3 X 8 AA repeats of S-A-N-Q-S-X-X-P region. Over residues 412-423 (TPSISGSISDAQ) the composition is skewed to polar residues. The span at 511-536 (TQTAQVDTVSTSTSTTSVTTNSVGTS) shows a compositional bias: low complexity. Residues 550–595 (HTDERINQSIHAMMAMGFSNEGAWLTQLLESVQGNIPAALDVMHVS) form the UBA domain.

Interacts with aPKC and Traf6.

It localises to the nucleus. The protein resides in the cytoplasm. Its function is as follows. Required for selective autophagy activation by ubiquitinated proteins. Implicated in sigma rhabdovirus multiplication and necessary for male fertility. Involved in activating transcription of Drs. The chain is Protein ref(2)P (ref(2)P) from Drosophila simulans (Fruit fly).